A 194-amino-acid polypeptide reads, in one-letter code: Type II restriction enzyme OkrAI (194 aa).

Mg(2+)-binding residues include glutamate 71, aspartate 86, and tryptophan 100. The active-site Proton acceptor is the glutamate 101.

Homodimer. It depends on Mg(2+) as a cofactor.

The catalysed reaction is Endonucleolytic cleavage of DNA to give specific double-stranded fragments with terminal 5'-phosphates.. A P subtype restriction enzyme that recognizes the double-stranded sequence 5'-GGATCC-3' and cleaves after G-1. This Oceanobacter kriegii (Oceanospirillum kriegii) protein is Type II restriction enzyme OkrAI.